The sequence spans 497 residues: Nucleoside transporter 1 (497 aa).

Over 1–26 (MSLKGGTAAPAPMAPPRKWYDMTSAE) the chain is Cytoplasmic. Residues 27-47 (FYVYVVAFMCGISIMMPINAV) form a helical membrane-spanning segment. The Extracellular segment spans residues 48–77 (FSAPSYMLEYYLYATKDPFLVPKMTNFWTN). Residues 78-98 (VMTYYNLISMVTSLVVEPLTL) traverse the membrane as a helical segment. At 99 to 107 (LKSFRKIPM) the chain is on the cytoplasmic side. Residues 108–128 (LVRLLGGLSVLIIEIIVLMVV) form a helical membrane-spanning segment. Residues 129 to 135 (PARGTTE) lie on the Extracellular side of the membrane. The chain crosses the membrane as a helical span at residues 136 to 156 (AGAVATMCIAGFIGGLGTSIF). The Cytoplasmic portion of the chain corresponds to 157-172 (ESTVYGMFGAFPPSFT). A helical transmembrane segment spans residues 173–193 (SIMMGGVGISGVLTSLIQIIV). Over 194-208 (KAALPDTYEGVKKQS) the chain is Extracellular. The helical transmembrane segment at 209 to 229 (YIYYSLDVGIQAATFIALIMM) threads the bilayer. The Cytoplasmic segment spans residues 230 to 337 (RFNSFAQLHF…SVFSVLRSVK (108 aa)). Residues 286-299 (NAEAHKDDPLAERE) show a composition bias toward basic and acidic residues. The tract at residues 286 to 316 (NAEAHKDDPLAERELSEEESGDSRAVEAAGE) is disordered. Residues 338-358 (WMFVACGFNFLITLFLFPGIA) form a helical membrane-spanning segment. The Extracellular portion of the chain corresponds to 359–361 (TGM). The chain crosses the membrane as a helical span at residues 362–382 (FPESKWFATVAVFIFNCCDVL). Residues 383 to 400 (GRFSSAFRITWPRRYNQR) are Cytoplasmic-facing. Residues 401-421 (WIIVAASFARVIFVPLLLLHS) traverse the membrane as a helical segment. Residues 422–432 (YHYIPSEAYGY) are Extracellular-facing. The helical transmembrane segment at 433–453 (VMQVVFGLSSGYIASMALVLG) threads the bilayer. The Cytoplasmic portion of the chain corresponds to 454-465 (PQSKGIDNDGKR). Residues 466–486 (FVAGTLMGISILVGGTIGTVL) form a helical membrane-spanning segment. At 487–497 (SIMTQTIRETY) the chain is on the extracellular side.

It belongs to the SLC29A/ENT transporter (TC 2.A.57) family.

Its subcellular location is the cell membrane. The enzyme catalyses adenosine(in) = adenosine(out). The catalysed reaction is hypoxanthine(out) = hypoxanthine(in). It catalyses the reaction inosine(in) = inosine(out). It carries out the reaction uridine(out) = uridine(in). The enzyme catalyses cytidine(in) = cytidine(out). Functionally, nucleoside transporter with broad substrate specificity. Transports adenosine with high affinity. Can also transport hypoxanthine, inosine, uridine and cytidine. The chain is Nucleoside transporter 1 from Crithidia fasciculata.